The chain runs to 423 residues: Gamma-glutamyl phosphate reductase (423 aa).

The protein belongs to the gamma-glutamyl phosphate reductase family.

The protein resides in the cytoplasm. The enzyme catalyses L-glutamate 5-semialdehyde + phosphate + NADP(+) = L-glutamyl 5-phosphate + NADPH + H(+). The protein operates within amino-acid biosynthesis; L-proline biosynthesis; L-glutamate 5-semialdehyde from L-glutamate: step 2/2. Catalyzes the NADPH-dependent reduction of L-glutamate 5-phosphate into L-glutamate 5-semialdehyde and phosphate. The product spontaneously undergoes cyclization to form 1-pyrroline-5-carboxylate. The protein is Gamma-glutamyl phosphate reductase of Burkholderia lata (strain ATCC 17760 / DSM 23089 / LMG 22485 / NCIMB 9086 / R18194 / 383).